A 362-amino-acid polypeptide reads, in one-letter code: Putative F-box protein At3g25750 (362 aa).

The 49-residue stretch at 4 to 52 (TEWSDLPEELLDLIANRYSSNIDVLRIRSTCKSWRSAVAMSKERLQFRF) folds into the F-box domain.

This is Putative F-box protein At3g25750 from Arabidopsis thaliana (Mouse-ear cress).